The following is a 424-amino-acid chain: MAKIVVTGGQALHGEVHISGAKNAVLPILCATLLADAPVEISNVPHLHDVITTVKLLSELGAEVTIDEGTLAKGRSILVDPRSVTHQIAPYELVKTMRASILVLGPLLARYGTAEVSLPGGCAIGSRPVDQHIKGLQALGADISVENGYIKATSNGRLKGGRYVFDMVSVTGTENVLMAAVLAEGTTVLENAAMEPEVTDLADCLIALGAQIEGAGTPRITVQGVERLGGGHHAVLPDRIETGTFLVAAAMTGGSVTVRRARPDTLDAVLDKLTEAGATITTTADSVTLDMHGKRPRAVNLTTAPYPAFPTDMQAQFMALNCVADGVGVINETIFENRFMHVNELLRLGADIQVEGHTAIVRGAERLSGAPVMATDLRASASLILAGLVADGDTTIDRIYHLDRGYENIEEKLGALGATIRRIA.

22–23 provides a ligand contact to phosphoenolpyruvate; sequence KN. Residue Arg-98 coordinates UDP-N-acetyl-alpha-D-glucosamine. The active-site Proton donor is the Cys-122. Position 122 is a 2-(S-cysteinyl)pyruvic acid O-phosphothioketal (Cys-122). UDP-N-acetyl-alpha-D-glucosamine is bound by residues 127-131, Asp-312, and Ile-334; that span reads RPVDQ.

It belongs to the EPSP synthase family. MurA subfamily.

The protein resides in the cytoplasm. The catalysed reaction is phosphoenolpyruvate + UDP-N-acetyl-alpha-D-glucosamine = UDP-N-acetyl-3-O-(1-carboxyvinyl)-alpha-D-glucosamine + phosphate. It functions in the pathway cell wall biogenesis; peptidoglycan biosynthesis. Functionally, cell wall formation. Adds enolpyruvyl to UDP-N-acetylglucosamine. The chain is UDP-N-acetylglucosamine 1-carboxyvinyltransferase from Xanthomonas campestris pv. campestris (strain 8004).